We begin with the raw amino-acid sequence, 347 residues long: Mitochondrial carrier protein rim2 (347 aa).

Solcar repeat units lie at residues 32–136, 146–234, and 256–345; these read PPPL…GKRI, ENSQ…FKHA, and LDWG…IMHF. Helical transmembrane passes span 38 to 58, 105 to 125, 152 to 172, 214 to 233, 262 to 282, and 317 to 338; these read FIAGGVAGMLGAIATAPLDVV, TRALFRGLGPNLIGTIPARSI, LMAAAIAGVITSAATNPIWLV, SLLGVGESTLQWVLYEKFKH, LGGAGIAKFMAAGIAYPHEVV, and LYGGLTAHLLRVVPNACILFGS.

Its subcellular location is the mitochondrion inner membrane. The enzyme catalyses 5-methyl-UTP(out) + UTP(in) = 5-methyl-UTP(in) + UTP(out). In terms of biological role, mitochondrial transporter that imports/exports pyrimidine nucleotides into and from mitochondria. Selectively transports uridine, thymidine, and cytosine (deoxy)nucleoside di- and triphosphates by an antiport mechanism. Also transports, with lower efficiency, uridine, thymidine, and cytosine (deoxy)nucleoside monophosphates as well as guanosine (deoxy)nucleoside di- and triphosphate. May import (deoxy)nucleoside triphosphates in exchange for intramitochondrial (deoxy)nucleoside monophosphates, thus providing precursors necessary for de novo synthesis of mitochondrial DNA and RNA while exporting products of their catabolism. Mediates the transport of iron and other divalent metal ions like copper and zinc across the mitochondrial inner membrane in a pyrimidine nucleotide-dependent fashion. Catalyzes the co-import of pyrimidine nucleotides and divalent metal ions including ferrous iron. Participates in mitochondrial genome maintenance, regulation of mitochondrial membrane potential and mitochondrial respiration. In Schizosaccharomyces pombe (strain 972 / ATCC 24843) (Fission yeast), this protein is Mitochondrial carrier protein rim2 (rim2).